The sequence spans 442 residues: Syndecan-3 (442 aa).

2 disordered regions span residues 1–25 (MKPGPPRRGTAQGQRVDTATHAPGA) and 47–80 (RWRNENFERPVDLEGSGDDDSFPDDELDDLYSGS). The N-terminal stretch at 1-44 (MKPGPPRRGTAQGQRVDTATHAPGARGLLLPPLLLLLLAGRAAG) is a signal peptide. Residues 45 to 387 (AQRWRNENFE…SILERKEVLV (343 aa)) are Extracellular-facing. Positions 48 to 58 (WRNENFERPVD) are enriched in basic and acidic residues. Acidic residues predominate over residues 61 to 75 (GSGDDDSFPDDELDD). Ser78, Ser80, Ser82, and Ser89 each carry an O-linked (Xyl...) (glycosaminoglycan) serine glycan. O-linked (GalNAc) threonine; by GALNT13 glycosylation is present at Thr107. Disordered stretches follow at residues 152–199 (ESSQ…PATA), 253–293 (ATSR…AQTP), and 305–327 (EPEVPVSGGPSGDFELQEETTQP). 2 stretches are compositionally biased toward low complexity: residues 157–199 (ATTI…PATA) and 276–287 (TLPLGTTAPGPT). The O-linked (GalNAc) serine; by GALNT13 glycan is linked to Ser161. Residues Thr162, Thr163, Thr170, and Thr172 are each glycosylated (O-linked (GalNAc) threonine; by GALNT13). Ser315 and Ser367 each carry an O-linked (Xyl...) (glycosaminoglycan) serine glycan. A helical transmembrane segment spans residues 388-408 (AVIVGGVVGALFAAFLVTLLI). Tyr409, Tyr419, Tyr431, and Tyr441 each carry phosphotyrosine. The Cytoplasmic portion of the chain corresponds to 409-442 (YRMKKKDEGSYTLEEPKQASVTYQKPDKQEEFYA). Positions 419 to 442 (YTLEEPKQASVTYQKPDKQEEFYA) are disordered. A compositionally biased stretch (basic and acidic residues) spans 433 to 442 (KPDKQEEFYA).

Belongs to the syndecan proteoglycan family. As to quaternary structure, interacts with TIAM1. Interacts with PTN (via heparan sulfate chains); this interaction mediates the neurite outgrowth-promoting signal from PTN to the cytoskeleton of growing neurites; this interaction mediates osteoblast recruitment. Interacts with MDK; this interaction induces SDC3 clustering; this interaction induces neuronal cell adhesion and neurite outgrowth. In terms of processing, O-glycosylated within the Thr/Ser-rich region which could interact with lectin domains on other molecules.

It is found in the cell membrane. Cell surface proteoglycan that may bear heparan sulfate. May have a role in the organization of cell shape by affecting the actin cytoskeleton, possibly by transferring signals from the cell surface in a sugar-dependent mechanism. The polypeptide is Syndecan-3 (Sdc3) (Mus musculus (Mouse)).